The primary structure comprises 150 residues: Large ribosomal subunit protein bL9 (150 aa).

This sequence belongs to the bacterial ribosomal protein bL9 family.

Functionally, binds to the 23S rRNA. The chain is Large ribosomal subunit protein bL9 from Paracidovorax citrulli (strain AAC00-1) (Acidovorax citrulli).